We begin with the raw amino-acid sequence, 957 residues long: UvrABC system protein A (957 aa).

Gly33–Ser40 contacts ATP. A C4-type zinc finger spans residues Cys252–Cys279. ABC transporter domains follow at residues Trp309 to Leu587 and Pro607 to Arg935. Residue Gly639–Ser646 coordinates ATP. Residues Cys738–Cys764 form a C4-type zinc finger.

This sequence belongs to the ABC transporter superfamily. UvrA family. In terms of assembly, forms a heterotetramer with UvrB during the search for lesions.

Its subcellular location is the cytoplasm. Its function is as follows. The UvrABC repair system catalyzes the recognition and processing of DNA lesions. UvrA is an ATPase and a DNA-binding protein. A damage recognition complex composed of 2 UvrA and 2 UvrB subunits scans DNA for abnormalities. When the presence of a lesion has been verified by UvrB, the UvrA molecules dissociate. This is UvrABC system protein A from Halalkalibacterium halodurans (strain ATCC BAA-125 / DSM 18197 / FERM 7344 / JCM 9153 / C-125) (Bacillus halodurans).